The sequence spans 594 residues: Potassium-transporting ATPase potassium-binding subunit (594 aa).

Transmembrane regions (helical) follow at residues alanine 3–leucine 23, alanine 67–leucine 87, alanine 136–valine 156, leucine 179–valine 199, leucine 287–valine 307, valine 314–phenylalanine 334, glycine 415–glycine 435, valine 453–leucine 473, valine 519–leucine 539, and leucine 562–alanine 582.

This sequence belongs to the KdpA family. The system is composed of three essential subunits: KdpA, KdpB and KdpC.

It localises to the cell inner membrane. Functionally, part of the high-affinity ATP-driven potassium transport (or Kdp) system, which catalyzes the hydrolysis of ATP coupled with the electrogenic transport of potassium into the cytoplasm. This subunit binds the periplasmic potassium ions and delivers the ions to the membrane domain of KdpB through an intramembrane tunnel. This Bordetella pertussis (strain Tohama I / ATCC BAA-589 / NCTC 13251) protein is Potassium-transporting ATPase potassium-binding subunit.